The chain runs to 201 residues: MAFDLDTIRSAAQRVASSHGLDVVDVEYQGGAKHRMLRIFIEKNAEERAKLAAQSSGRVETIEVHEEMPREGMNPEHFSGVTHEDCSAFSTDFGTLLDVEELMPGASEYTLEVSSPGLDRKLQSRADYERFAGSLVKLSTFEPVNGNRHWQGRMAGLDGDTLRLDLTAMKQKGKGKEKKSAAETVEIALGNVEKAQLIPEI.

It belongs to the RimP family.

The protein localises to the cytoplasm. Functionally, required for maturation of 30S ribosomal subunits. This is Ribosome maturation factor RimP from Acidobacterium capsulatum (strain ATCC 51196 / DSM 11244 / BCRC 80197 / JCM 7670 / NBRC 15755 / NCIMB 13165 / 161).